A 220-amino-acid polypeptide reads, in one-letter code: Probable GTP-binding protein EngB (220 aa).

Residues 26–200 (EGIEIAFAGR…RAKLDEWYAP (175 aa)) enclose the EngB-type G domain. Residues 34–41 (GRSNAGKS), 61–65 (GRTQL), 79–82 (DLPG), 146–149 (TKAD), and 179–181 (FSS) contribute to the GTP site. Positions 41 and 63 each coordinate Mg(2+).

The protein belongs to the TRAFAC class TrmE-Era-EngA-EngB-Septin-like GTPase superfamily. EngB GTPase family. It depends on Mg(2+) as a cofactor.

Functionally, necessary for normal cell division and for the maintenance of normal septation. This chain is Probable GTP-binding protein EngB, found in Vibrio cholerae serotype O1 (strain ATCC 39315 / El Tor Inaba N16961).